The chain runs to 194 residues: Glycerol-3-phosphate acyltransferase (194 aa).

6 consecutive transmembrane segments (helical) span residues 2 to 22 (AFFC…GVWI), 52 to 72 (LGVA…YIAS), 80 to 100 (DLVI…FISF), 112 to 132 (VFLF…ILVA), 137 to 157 (YVSL…FFTH), and 161 to 181 (YLFA…KTNI).

The protein belongs to the PlsY family. As to quaternary structure, probably interacts with PlsX.

It is found in the cell inner membrane. It carries out the reaction an acyl phosphate + sn-glycerol 3-phosphate = a 1-acyl-sn-glycero-3-phosphate + phosphate. It participates in lipid metabolism; phospholipid metabolism. Its function is as follows. Catalyzes the transfer of an acyl group from acyl-phosphate (acyl-PO(4)) to glycerol-3-phosphate (G3P) to form lysophosphatidic acid (LPA). This enzyme utilizes acyl-phosphate as fatty acyl donor, but not acyl-CoA or acyl-ACP. The sequence is that of Glycerol-3-phosphate acyltransferase from Fusobacterium nucleatum subsp. nucleatum (strain ATCC 25586 / DSM 15643 / BCRC 10681 / CIP 101130 / JCM 8532 / KCTC 2640 / LMG 13131 / VPI 4355).